A 424-amino-acid chain; its full sequence is Serine--tRNA ligase (424 aa).

Residue 228–230 (TAE) participates in L-serine binding. Residue 259 to 261 (RSE) participates in ATP binding. Glutamate 282 lines the L-serine pocket. Residue 346 to 349 (EISS) coordinates ATP. An L-serine-binding site is contributed by serine 382.

Belongs to the class-II aminoacyl-tRNA synthetase family. Type-1 seryl-tRNA synthetase subfamily. Homodimer. The tRNA molecule binds across the dimer.

The protein resides in the cytoplasm. It carries out the reaction tRNA(Ser) + L-serine + ATP = L-seryl-tRNA(Ser) + AMP + diphosphate + H(+). The catalysed reaction is tRNA(Sec) + L-serine + ATP = L-seryl-tRNA(Sec) + AMP + diphosphate + H(+). The protein operates within aminoacyl-tRNA biosynthesis; selenocysteinyl-tRNA(Sec) biosynthesis; L-seryl-tRNA(Sec) from L-serine and tRNA(Sec): step 1/1. Catalyzes the attachment of serine to tRNA(Ser). Is also able to aminoacylate tRNA(Sec) with serine, to form the misacylated tRNA L-seryl-tRNA(Sec), which will be further converted into selenocysteinyl-tRNA(Sec). This is Serine--tRNA ligase from Rhodospirillum centenum (strain ATCC 51521 / SW).